A 92-amino-acid polypeptide reads, in one-letter code: RNA-binding protein Hfq (92 aa).

The Sm domain occupies 9 to 68 (DPFLNALRRERVPVSIYLVNGIKLQGQVESFDQFVILLKNTVSQMVYKHAISTVVPSRPF).

It belongs to the Hfq family. Homohexamer.

Functionally, RNA chaperone that binds small regulatory RNA (sRNAs) and mRNAs to facilitate mRNA translational regulation in response to envelope stress, environmental stress and changes in metabolite concentrations. Also binds with high specificity to tRNAs. This is RNA-binding protein Hfq from Shewanella halifaxensis (strain HAW-EB4).